A 186-amino-acid chain; its full sequence is Phosphoheptose isomerase 1 (186 aa).

Residues 33 to 186 (LCECLKKGGK…TLCQIIDESF (154 aa)) enclose the SIS domain. Position 48–50 (48–50 (NGG)) interacts with substrate. Positions 57 and 61 each coordinate Zn(2+). Substrate-binding positions include glutamate 61, 90–91 (ND), 116–118 (STS), serine 121, and glutamine 168. Glutamine 168 and histidine 176 together coordinate Zn(2+).

This sequence belongs to the SIS family. GmhA subfamily. In terms of assembly, homotetramer. It depends on Zn(2+) as a cofactor.

Its subcellular location is the cytoplasm. The enzyme catalyses 2 D-sedoheptulose 7-phosphate = D-glycero-alpha-D-manno-heptose 7-phosphate + D-glycero-beta-D-manno-heptose 7-phosphate. It participates in carbohydrate biosynthesis; D-glycero-D-manno-heptose 7-phosphate biosynthesis; D-glycero-alpha-D-manno-heptose 7-phosphate and D-glycero-beta-D-manno-heptose 7-phosphate from sedoheptulose 7-phosphate: step 1/1. The protein operates within bacterial outer membrane biogenesis; LOS core biosynthesis. Functionally, catalyzes the isomerization of sedoheptulose 7-phosphate in D-glycero-D-manno-heptose 7-phosphate. The protein is Phosphoheptose isomerase 1 (gmhA1) of Campylobacter jejuni subsp. jejuni serotype O:2 (strain ATCC 700819 / NCTC 11168).